The chain runs to 217 residues: Ribonuclease HII (217 aa).

Residues 27–216 (SQVAGVDEAG…VKESIQEGVC (190 aa)) form the RNase H type-2 domain. 3 residues coordinate a divalent metal cation: aspartate 33, glutamate 34, and aspartate 126.

Belongs to the RNase HII family. Requires Mn(2+) as cofactor. Mg(2+) is required as a cofactor.

The protein resides in the cytoplasm. It carries out the reaction Endonucleolytic cleavage to 5'-phosphomonoester.. In terms of biological role, endonuclease that specifically degrades the RNA of RNA-DNA hybrids. This chain is Ribonuclease HII, found in Chlamydia trachomatis serovar L2 (strain ATCC VR-902B / DSM 19102 / 434/Bu).